Here is a 302-residue protein sequence, read N- to C-terminus: Sulfate adenylyltransferase subunit 2 (302 aa).

It belongs to the PAPS reductase family. CysD subfamily. Heterodimer composed of CysD, the smaller subunit, and CysN.

It catalyses the reaction sulfate + ATP + H(+) = adenosine 5'-phosphosulfate + diphosphate. The protein operates within sulfur metabolism; hydrogen sulfide biosynthesis; sulfite from sulfate: step 1/3. Its function is as follows. With CysN forms the ATP sulfurylase (ATPS) that catalyzes the adenylation of sulfate producing adenosine 5'-phosphosulfate (APS) and diphosphate, the first enzymatic step in sulfur assimilation pathway. APS synthesis involves the formation of a high-energy phosphoric-sulfuric acid anhydride bond driven by GTP hydrolysis by CysN coupled to ATP hydrolysis by CysD. This Shewanella pealeana (strain ATCC 700345 / ANG-SQ1) protein is Sulfate adenylyltransferase subunit 2.